A 360-amino-acid chain; its full sequence is UDP-3-O-acylglucosamine N-acyltransferase (360 aa).

The active-site Proton acceptor is histidine 256. Positions glutamate 341 to glycine 360 are disordered. Residues alanine 349–glycine 360 show a composition bias toward basic and acidic residues.

The protein belongs to the transferase hexapeptide repeat family. LpxD subfamily. Homotrimer.

The enzyme catalyses a UDP-3-O-[(3R)-3-hydroxyacyl]-alpha-D-glucosamine + a (3R)-hydroxyacyl-[ACP] = a UDP-2-N,3-O-bis[(3R)-3-hydroxyacyl]-alpha-D-glucosamine + holo-[ACP] + H(+). It participates in bacterial outer membrane biogenesis; LPS lipid A biosynthesis. Functionally, catalyzes the N-acylation of UDP-3-O-acylglucosamine using 3-hydroxyacyl-ACP as the acyl donor. Is involved in the biosynthesis of lipid A, a phosphorylated glycolipid that anchors the lipopolysaccharide to the outer membrane of the cell. The protein is UDP-3-O-acylglucosamine N-acyltransferase of Rhodopseudomonas palustris (strain TIE-1).